The chain runs to 505 residues: Sucrose porin (505 aa).

Positions Met1–Ala22 are cleaved as a signal peptide. The disordered stretch occupies residues Glu44–Lys87. Over residues Gln62–Gln72 the composition is skewed to low complexity.

The protein belongs to the porin LamB (TC 1.B.3) family. As to quaternary structure, homotrimer.

It is found in the cell outer membrane. In terms of biological role, porin for sucrose uptake. The protein is Sucrose porin (scrY) of Salmonella typhimurium.